The following is a 749-amino-acid chain: Homeobox-leucine zipper protein ROC7 (749 aa).

Residues 26–98 (LDQHQQHQHQ…KKRYHRHTQH (73 aa)) form a disordered region. Residues 46-57 (SDGRAPRDELEM) are compositionally biased toward basic and acidic residues. Residues 68–78 (SGGGGGGGGSG) are compositionally biased toward gly residues. Residues 86–97 (RPRKKRYHRHTQ) show a composition bias toward basic residues. Residues 88 to 147 (RKKRYHRHTQHQIQELEAFFKECPHPDDKQRKELSRELGLEPLQVKFWFQNKRTQMKTQH) constitute a DNA-binding region (homeobox). A coiled-coil region spans residues 137–218 (QNKRTQMKTQ…DRISAIAAKY (82 aa)). The START domain maps to 256-494 (ADFDKPLVIE…LERQCERLAS (239 aa)).

This sequence belongs to the HD-ZIP homeobox family. Class IV subfamily.

It localises to the nucleus. Its function is as follows. Probable transcription factor. The protein is Homeobox-leucine zipper protein ROC7 (ROC7) of Oryza sativa subsp. indica (Rice).